The primary structure comprises 538 residues: Putative cysteine ligase BshC (538 aa).

A coiled-coil region spans residues Lys460 to Leu484.

Belongs to the BshC family.

In terms of biological role, involved in bacillithiol (BSH) biosynthesis. May catalyze the last step of the pathway, the addition of cysteine to glucosamine malate (GlcN-Mal) to generate BSH. The protein is Putative cysteine ligase BshC of Bacillus cereus (strain ZK / E33L).